The following is a 98-amino-acid chain: MKKIWFHLDLQFFASKKGVGSTKNGRDSNPKFLGAKLADGQQAKTGQIIYRQRGNKIWPGKNVGQGKDDTLFALADGIVRYTKFLGNKTKVSVVEQSK.

Residues 1 to 13 (MKKIWFHLDLQFF) constitute a propeptide that is removed on maturation.

This sequence belongs to the bacterial ribosomal protein bL27 family. The N-terminus is cleaved by ribosomal processing cysteine protease Prp.

The sequence is that of Large ribosomal subunit protein bL27 from Mycoplasmoides gallisepticum (strain R(low / passage 15 / clone 2)) (Mycoplasma gallisepticum).